The sequence spans 157 residues: Type II restriction enzyme PvuII (157 aa).

Asp-58 and Glu-68 together coordinate Mg(2+).

Homodimer. It depends on Mg(2+) as a cofactor.

It catalyses the reaction Endonucleolytic cleavage of DNA to give specific double-stranded fragments with terminal 5'-phosphates.. A P subtype restriction enzyme that recognizes the double-stranded sequence 5'-CAGCTG-3' and cleaves after G-3. This is Type II restriction enzyme PvuII (pvuIIR) from Proteus hauseri.